Consider the following 385-residue polypeptide: Spermidine/putrescine import ATP-binding protein PotA (385 aa).

An ABC transporter domain is found at 6–238 (IEFKNVSKVF…PINHFVATFI (233 aa)). 40-47 (GSSGSGKS) contributes to the ATP binding site.

This sequence belongs to the ABC transporter superfamily. Spermidine/putrescine importer (TC 3.A.1.11.1) family. As to quaternary structure, the complex is composed of two ATP-binding proteins (PotA), two transmembrane proteins (PotB and PotC) and a solute-binding protein (PotD).

It is found in the cell membrane. It carries out the reaction ATP + H2O + polyamine-[polyamine-binding protein]Side 1 = ADP + phosphate + polyamineSide 2 + [polyamine-binding protein]Side 1.. In terms of biological role, part of the ABC transporter complex PotABCD involved in spermidine/putrescine import. Responsible for energy coupling to the transport system. This is Spermidine/putrescine import ATP-binding protein PotA from Streptococcus sanguinis (strain SK36).